The primary structure comprises 258 residues: Acetylglutamate kinase (258 aa).

Substrate-binding positions include 44–45 (GG), Arg66, and Asn158. ATP contacts are provided by residues 181–186 (DVSGIL) and 209–211 (IIT).

It belongs to the acetylglutamate kinase family. ArgB subfamily. Homodimer.

It is found in the cytoplasm. It catalyses the reaction N-acetyl-L-glutamate + ATP = N-acetyl-L-glutamyl 5-phosphate + ADP. The protein operates within amino-acid biosynthesis; L-arginine biosynthesis; N(2)-acetyl-L-ornithine from L-glutamate: step 2/4. Catalyzes the ATP-dependent phosphorylation of N-acetyl-L-glutamate. The polypeptide is Acetylglutamate kinase (Shigella flexneri).